The primary structure comprises 181 residues: Protein Syd (181 aa).

The protein belongs to the Syd family.

Its subcellular location is the cell inner membrane. Interacts with the SecY protein in vivo. May bind preferentially to an uncomplexed state of SecY, thus functioning either as a chelating agent for excess SecY in the cell or as a regulatory factor that negatively controls the translocase function. The protein is Protein Syd of Klebsiella pneumoniae subsp. pneumoniae (strain ATCC 700721 / MGH 78578).